Consider the following 154-residue polypeptide: TSET complex member tstD (154 aa).

The protein belongs to the adaptor complexes small subunit family. In terms of assembly, component of the TSET complex, a heterohexamer composed of tstA, tstB, tstC, tstD, tstE and tstF, which may act in plasma membrane turnover. tstA, tstB, tstC and tstD are likely to be the core complex members with tstE and tstF acting as associated scaffold proteins.

The protein resides in the cell membrane. The protein localises to the cytoplasm. The sequence is that of TSET complex member tstD from Dictyostelium discoideum (Social amoeba).